A 252-amino-acid polypeptide reads, in one-letter code: Glucosamine-6-phosphate deaminase (252 aa).

The Proton acceptor; for enolization step role is filled by Asp64. Asn130 (for ring-opening step) is an active-site residue. His132 serves as the catalytic Proton acceptor; for ring-opening step. Glu137 (for ring-opening step) is an active-site residue.

The protein belongs to the glucosamine/galactosamine-6-phosphate isomerase family. NagB subfamily.

The enzyme catalyses alpha-D-glucosamine 6-phosphate + H2O = beta-D-fructose 6-phosphate + NH4(+). The protein operates within amino-sugar metabolism; N-acetylneuraminate degradation; D-fructose 6-phosphate from N-acetylneuraminate: step 5/5. Its function is as follows. Catalyzes the reversible isomerization-deamination of glucosamine 6-phosphate (GlcN6P) to form fructose 6-phosphate (Fru6P) and ammonium ion. This chain is Glucosamine-6-phosphate deaminase, found in Exiguobacterium sibiricum (strain DSM 17290 / CCUG 55495 / CIP 109462 / JCM 13490 / 255-15).